The chain runs to 409 residues: Glutamate--tRNA ligase 2 (409 aa).

The 'HIGH' region motif lies at 9–19 (PSPTGNLHIGG). The short motif at 198–202 (KLSKR) is the 'KMSKS' region element. Position 201 (lysine 201) interacts with ATP.

The protein belongs to the class-I aminoacyl-tRNA synthetase family. Glutamate--tRNA ligase type 1 subfamily. Monomer.

It localises to the cytoplasm. It carries out the reaction tRNA(Glu) + L-glutamate + ATP = L-glutamyl-tRNA(Glu) + AMP + diphosphate. Functionally, catalyzes the attachment of glutamate to tRNA(Glu) in a two-step reaction: glutamate is first activated by ATP to form Glu-AMP and then transferred to the acceptor end of tRNA(Glu). The sequence is that of Glutamate--tRNA ligase 2 from Neorickettsia sennetsu (strain ATCC VR-367 / Miyayama) (Ehrlichia sennetsu).